A 167-amino-acid chain; its full sequence is Leptin (167 aa).

Residues 1-21 form the signal peptide; the sequence is MRCGPLYRFLWLWPYLSYVEA. The cysteines at positions 117 and 167 are disulfide-linked.

It belongs to the leptin family.

Its subcellular location is the secreted. In terms of biological role, key player in the regulation of energy balance and body weight control. Once released into the circulation, has central and peripheral effects by binding LEPR, found in many tissues, which results in the activation of several major signaling pathways. In the hypothalamus, acts as an appetite-regulating factor that induces a decrease in food intake and an increase in energy consumption by inducing anorexinogenic factors and suppressing orexigenic neuropeptides, also regulates bone mass and secretion of hypothalamo-pituitary-adrenal hormones. In the periphery, increases basal metabolism, influences reproductive function, regulates pancreatic beta-cell function and insulin secretion, is pro-angiogenic for endothelial cell and affects innate and adaptive immunity. In the arcuate nucleus of the hypothalamus, activates by depolarization POMC neurons inducing FOS and SOCS3 expression to release anorexigenic peptides and inhibits by hyperpolarization NPY neurons inducing SOCS3 with a consequent reduction on release of orexigenic peptides. In addition to its known satiety inducing effect, has a modulatory role in nutrient absorption. In the intestine, reduces glucose absorption by enterocytes by activating PKC and leading to a sequential activation of p38, PI3K and ERK signaling pathways which exerts an inhibitory effect on glucose absorption. Acts as a growth factor on certain tissues, through the activation of different signaling pathways increases expression of genes involved in cell cycle regulation such as CCND1, via JAK2-STAT3 pathway, or VEGFA, via MAPK1/3 and PI3K-AKT1 pathways. May also play an apoptotic role via JAK2-STAT3 pathway and up-regulation of BIRC5 expression. Pro-angiogenic, has mitogenic activity on vascular endothelial cells and plays a role in matrix remodeling by regulating the expression of matrix metalloproteinases (MMPs) and tissue inhibitors of metalloproteinases (TIMPs). In innate immunity, modulates the activity and function of neutrophils by increasing chemotaxis and the secretion of oxygen radicals. Increases phagocytosis by macrophages and enhances secretion of pro-inflammatory mediators. Increases cytotoxic ability of NK cells. Plays a pro-inflammatory role, in synergy with IL1B, by inducing NOS2 which promotes the production of IL6, IL8 and Prostaglandin E2, through a signaling pathway that involves JAK2, PI3K, MAP2K1/MEK1 and MAPK14/p38. In adaptive immunity, promotes the switch of memory T-cells towards T helper-1 cell immune responses. Increases CD4(+)CD25(-) T-cell proliferation and reduces autophagy during TCR (T-cell receptor) stimulation, through MTOR signaling pathway activation and BCL2 up-regulation. This Capra hircus (Goat) protein is Leptin (LEP).